We begin with the raw amino-acid sequence, 105 residues long: Large ribosomal subunit protein uL24 (105 aa).

It belongs to the universal ribosomal protein uL24 family. Part of the 50S ribosomal subunit.

In terms of biological role, one of two assembly initiator proteins, it binds directly to the 5'-end of the 23S rRNA, where it nucleates assembly of the 50S subunit. Its function is as follows. One of the proteins that surrounds the polypeptide exit tunnel on the outside of the subunit. The protein is Large ribosomal subunit protein uL24 of Mycobacterium avium (strain 104).